The sequence spans 195 residues: Packaging protein 2 (195 aa).

Residues 1–124 (MAPKKKLQLP…QEQQQRQGYR (124 aa)) are disordered. The segment covering 15–53 (TDEEEYWDSQAEEVLDEEEEMMEDWDSLDEASEAEEVSD) has biased composition (acidic residues). The segment covering 54 to 63 (ETPSPSVAFP) has biased composition (low complexity).

The protein belongs to the adenoviridae splicing factor family. Part of a genome packaging complex composed of packaging proteins 1, 2 and 3; this complex specifically binds to the packaging sequence on the left end of viral genomic DNA and performs packaging of the viral genome. Self-assembles into higher-order structures.

It is found in the host nucleus. Component of the packaging machinery which encapsidates the viral DNA into preformed capsids and transcriptional activator of the viral major late promoter (MLP). Binds, along with packaging proteins 1 and 3, to the specific packaging sequence on the left end of viral genomic DNA and plays an active role in packaging of the viral genome into preformed capsids. Specifically binds to the 5'-TTTG-3' nucleotides of the repeats making up the packaging sequence. Forms a transcription factor called DEF-A through cooperative binding with packaging protein 1. DEF-A binds to downstream elements of the major late promoter (MLP) and stimulates transcription from the MLP after initiation of viral DNA replication. Simultaneously suppresses early gene expression and is thus likely to participate in the early-late switch in the expression pattern of the late viral proteins. May as well enhance transcription from IVa2 and pIX promoters. This is Packaging protein 2 from Homo sapiens (Human).